A 101-amino-acid chain; its full sequence is Urease subunit beta (101 aa).

This sequence belongs to the urease beta subunit family. In terms of assembly, heterotrimer of UreA (gamma), UreB (beta) and UreC (alpha) subunits. Three heterotrimers associate to form the active enzyme.

It localises to the cytoplasm. It catalyses the reaction urea + 2 H2O + H(+) = hydrogencarbonate + 2 NH4(+). It participates in nitrogen metabolism; urea degradation; CO(2) and NH(3) from urea (urease route): step 1/1. The polypeptide is Urease subunit beta (Acaryochloris marina (strain MBIC 11017)).